The sequence spans 125 residues: Fluoride-specific ion channel FluC (125 aa).

4 helical membrane passes run 5–25, 29–49, 66–86, and 95–115; these read LLVA…GALV, LGAG…FLIG, LFLA…SYET, and VGKA…LAFL. Residues glycine 74 and threonine 77 each contribute to the Na(+) site.

This sequence belongs to the fluoride channel Fluc/FEX (TC 1.A.43) family.

It is found in the cell inner membrane. The catalysed reaction is fluoride(in) = fluoride(out). Na(+) is not transported, but it plays an essential structural role and its presence is essential for fluoride channel function. Functionally, fluoride-specific ion channel. Important for reducing fluoride concentration in the cell, thus reducing its toxicity. The polypeptide is Fluoride-specific ion channel FluC (Thermus thermophilus (strain ATCC 27634 / DSM 579 / HB8)).